The primary structure comprises 204 residues: Vacuolar protein-sorting-associated protein 46 (204 aa).

The tract at residues 1–103 (MSRNSAAGLE…ASMGQVCKGM (103 aa)) is interaction with VSP24. Ser5 carries the phosphoserine modification. Coiled-coil stretches lie at residues 9–56 (LENT…RIYA) and 109–129 (NMNL…FEDL). The segment at 104 to 204 (DKALQNMNLQ…LAQRLRALRG (101 aa)) is interaction with VSP4. The interaction with VTA1 stretch occupies residues 176–204 (NVPEIKAKEVNVDDEKEDKLAQRLRALRG). A compositionally biased stretch (basic and acidic residues) spans 185–196 (VNVDDEKEDKLA). Residues 185–204 (VNVDDEKEDKLAQRLRALRG) form a disordered region.

Belongs to the SNF7 family. As to quaternary structure, self-associates. Interacts with VPS4 and VTA1. Interacts with IST1.

It is found in the endosome membrane. The protein localises to the endomembrane system. In terms of biological role, class E VPS protein implicated in concentration and sorting of cargo proteins of the multivesicular body (MVB) for incorporation into intralumenal vesicles. The lumenal sequestrated membrane proteins will be targeted into the vacuole after fusion of the endosome with the vacuole. Probably acts as a peripherally associated component of the ESCRT-III complex, which appears to be critical for late steps in MVB sorting, such as membrane invagination and final cargo sorting and recruits late-acting components of the sorting machinery. The MVB pathway requires the sequential function of ESCRT-O, -I,-II and -III complex assemblies. Regulates the membrane association of VPS4. Can stimulate VPS4 ATPase activity directly or via VTA1. In Saccharomyces cerevisiae (strain ATCC 204508 / S288c) (Baker's yeast), this protein is Vacuolar protein-sorting-associated protein 46 (DID2).